The following is a 64-amino-acid chain: Cytochrome b-c1 complex subunit 9 (64 aa).

Residues 2-18 (SSPTIPSRLYSLLFRRT) lie on the Mitochondrial matrix side of the membrane. A helical membrane pass occupies residues 19-43 (STFALTIAVGALFFERAFDQGADAI). Topologically, residues 44–63 (YEHINEGKLWKHIKHKYENK) are mitochondrial intermembrane.

The protein belongs to the UQCR10/QCR9 family. Component of the ubiquinol-cytochrome c oxidoreductase (cytochrome b-c1 complex, complex III, CIII), a multisubunit enzyme composed of 11 subunits. The complex is composed of 3 respiratory subunits cytochrome b, cytochrome c1 and Rieske protein UQCRFS1, 2 core protein subunits UQCRC1/QCR1 and UQCRC2/QCR2, and 6 low-molecular weight protein subunits UQCRH/QCR6, UQCRB/QCR7, UQCRQ/QCR8, UQCR10/QCR9, UQCR11/QCR10 and subunit 9, the cleavage product of Rieske protein UQCRFS1. The complex exists as an obligatory dimer and forms supercomplexes (SCs) in the inner mitochondrial membrane with NADH-ubiquinone oxidoreductase (complex I, CI) and cytochrome c oxidase (complex IV, CIV), resulting in different assemblies (supercomplex SCI(1)III(2)IV(1) and megacomplex MCI(2)III(2)IV(2)). Interacts with STMP1.

Its subcellular location is the mitochondrion inner membrane. In terms of biological role, component of the ubiquinol-cytochrome c oxidoreductase, a multisubunit transmembrane complex that is part of the mitochondrial electron transport chain which drives oxidative phosphorylation. The respiratory chain contains 3 multisubunit complexes succinate dehydrogenase (complex II, CII), ubiquinol-cytochrome c oxidoreductase (cytochrome b-c1 complex, complex III, CIII) and cytochrome c oxidase (complex IV, CIV), that cooperate to transfer electrons derived from NADH and succinate to molecular oxygen, creating an electrochemical gradient over the inner membrane that drives transmembrane transport and the ATP synthase. The cytochrome b-c1 complex catalyzes electron transfer from ubiquinol to cytochrome c, linking this redox reaction to translocation of protons across the mitochondrial inner membrane, with protons being carried across the membrane as hydrogens on the quinol. In the process called Q cycle, 2 protons are consumed from the matrix, 4 protons are released into the intermembrane space and 2 electrons are passed to cytochrome c. The chain is Cytochrome b-c1 complex subunit 9 (Uqcr10) from Mus musculus (Mouse).